A 1630-amino-acid polypeptide reads, in one-letter code: Separin (1630 aa).

The segment at 1016–1037 (SKHSTGLKLCDSPRSSSMTPRG) is disordered. The Peptidase C50 domain occupies 1443–1542 (EDNISMILNP…SAAMKYYGKL (100 aa)). Cys1531 is a catalytic residue.

May bind calcium. Interacts with PDS1. Interacts with MCD1.

It is found in the nucleus. The protein resides in the cytoplasm. The protein localises to the cytoskeleton. It localises to the microtubule organizing center. Its subcellular location is the spindle pole body. The catalysed reaction is All bonds known to be hydrolyzed by this endopeptidase have arginine in P1 and an acidic residue in P4. P6 is often occupied by an acidic residue or by a hydroxy-amino-acid residue, the phosphorylation of which enhances cleavage.. It is inactivated via its interaction with PDS1, which probably covers its active site. PDS1 degradation at anaphase, liberates it and triggers MCD1 cleavage. In terms of biological role, caspase-like protease, which plays a central role in the chromosome segregation by cleaving the MCD1/SCC1 subunit of the cohesin complex at the onset of anaphase. During most of the cell cycle, it is inactivated by securin/PDS1 protein. It also promotes anaphase spindle elongation. A component of the FEAR (CDC14 early anaphase release) network which promotes CDC14 release from the nucleolus during early anaphase. Cleaves SLK19. This chain is Separin (ESP1), found in Saccharomyces cerevisiae (strain ATCC 204508 / S288c) (Baker's yeast).